We begin with the raw amino-acid sequence, 454 residues long: Bifunctional protein GlmU (454 aa).

The tract at residues 1-225 is pyrophosphorylase; sequence MNIVILAAGM…LWETLGVNSK (225 aa). Residues 6–9, lysine 20, glutamine 71, 76–77, 98–100, glycine 135, glutamate 150, asparagine 165, and asparagine 223 each bind UDP-N-acetyl-alpha-D-glucosamine; these read LAAG, GT, and YGD. Aspartate 100 contributes to the Mg(2+) binding site. Asparagine 223 lines the Mg(2+) pocket. Positions 226-246 are linker; the sequence is VQLAEIERIHQRNIAQRLLEA. Residues 247–454 are N-acetyltransferase; it reads GVTLLDPARI…WQRPVKQPKK (208 aa). UDP-N-acetyl-alpha-D-glucosamine-binding residues include arginine 329 and lysine 347. The Proton acceptor role is filled by histidine 359. Residues tyrosine 362 and asparagine 373 each contribute to the UDP-N-acetyl-alpha-D-glucosamine site. Acetyl-CoA-binding positions include alanine 376, 382–383, serine 401, alanine 419, and arginine 436; that span reads NY.

The protein in the N-terminal section; belongs to the N-acetylglucosamine-1-phosphate uridyltransferase family. This sequence in the C-terminal section; belongs to the transferase hexapeptide repeat family. As to quaternary structure, homotrimer. The cofactor is Mg(2+).

It localises to the cytoplasm. The enzyme catalyses alpha-D-glucosamine 1-phosphate + acetyl-CoA = N-acetyl-alpha-D-glucosamine 1-phosphate + CoA + H(+). The catalysed reaction is N-acetyl-alpha-D-glucosamine 1-phosphate + UTP + H(+) = UDP-N-acetyl-alpha-D-glucosamine + diphosphate. It functions in the pathway nucleotide-sugar biosynthesis; UDP-N-acetyl-alpha-D-glucosamine biosynthesis; N-acetyl-alpha-D-glucosamine 1-phosphate from alpha-D-glucosamine 6-phosphate (route II): step 2/2. The protein operates within nucleotide-sugar biosynthesis; UDP-N-acetyl-alpha-D-glucosamine biosynthesis; UDP-N-acetyl-alpha-D-glucosamine from N-acetyl-alpha-D-glucosamine 1-phosphate: step 1/1. It participates in bacterial outer membrane biogenesis; LPS lipid A biosynthesis. In terms of biological role, catalyzes the last two sequential reactions in the de novo biosynthetic pathway for UDP-N-acetylglucosamine (UDP-GlcNAc). The C-terminal domain catalyzes the transfer of acetyl group from acetyl coenzyme A to glucosamine-1-phosphate (GlcN-1-P) to produce N-acetylglucosamine-1-phosphate (GlcNAc-1-P), which is converted into UDP-GlcNAc by the transfer of uridine 5-monophosphate (from uridine 5-triphosphate), a reaction catalyzed by the N-terminal domain. This is Bifunctional protein GlmU from Cupriavidus metallidurans (strain ATCC 43123 / DSM 2839 / NBRC 102507 / CH34) (Ralstonia metallidurans).